A 2896-amino-acid polypeptide reads, in one-letter code: Protein PRRC2C (2896 aa).

Residue lysine 27 is modified to N6-acetyllysine. The tract at residues 28 to 212 (GKSLETQKTT…STAGTSEQND (185 aa)) is disordered. Residues 88 to 97 (QEQHEEEKTP) show a composition bias toward basic and acidic residues. The segment covering 105-119 (KPGVAAPPEVAPAPK) has biased composition (low complexity). Over residues 134 to 144 (QVNSQFQQEFP) the composition is skewed to polar residues. Over residues 151-160 (DQEKKEKETN) the composition is skewed to basic and acidic residues. Residues serine 187 and serine 191 each carry the phosphoserine modification. Polar residues predominate over residues 201-211 (DESTAGTSEQN). Arginine 242 bears the Asymmetric dimethylarginine; alternate mark. Arginine 242 carries the post-translational modification Omega-N-methylarginine; alternate. Asymmetric dimethylarginine is present on residues arginine 255 and arginine 266. 2 disordered regions span residues 264–729 (PMRF…QHLA) and 750–788 (SGRP…SFEH). An omega-N-methylarginine mark is found at arginine 279 and arginine 281. Over residues 301-310 (ELKELDKFDN) the composition is skewed to basic and acidic residues. Serine 335 is subject to Phosphoserine. Over residues 341 to 358 (GSNSPKENNSEDQGSKAS) the composition is skewed to polar residues. Residues 359-368 (ENNENKKETD) show a composition bias toward basic and acidic residues. Residues 370 to 381 (VSNTKSSSQIPA) show a composition bias toward polar residues. N6-acetyllysine is present on lysine 392. Phosphoserine is present on residues serine 395 and serine 500. The segment covering 395–405 (SFNQERGTSSH) has biased composition (polar residues). Residues 465 to 648 (RREEEERRME…EATPVVHETE (184 aa)) show a composition bias toward basic and acidic residues. The segment covering 676–708 (QRQQEQMKQQQWQQQQQQGVLPQTVPSQPSSST) has biased composition (low complexity). A compositionally biased stretch (pro residues) spans 759–769 (PIHPGMIPPKP). Serine 779, serine 785, and serine 801 each carry phosphoserine. The disordered stretch occupies residues 804–1118 (RMLWGSDPYP…PVSTVQVEPA (315 aa)). 3 stretches are compositionally biased toward basic and acidic residues: residues 825 to 836 (ATEEPEDVRSEA), 852 to 867 (NQLE…RESS), and 878 to 888 (SVEDVRPHHTD). Phosphoserine is present on residues serine 867, serine 878, serine 920, and serine 929. 3 stretches are compositionally biased toward basic and acidic residues: residues 954–993 (IDSK…ETRW), 1000–1010 (NRREEVNDRPV), and 1020–1058 (VLRD…KKDL). Residues 1020-1046 (VLRDMKEEREQRKEKEGEKAEKVTEKV) adopt a coiled-coil conformation. The segment covering 1059–1081 (PPPPPPPQPPAPIQPQSVPPPIQ) has biased composition (pro residues). Over residues 1089-1100 (STETATLAQKPS) the composition is skewed to polar residues. A Glycyl lysine isopeptide (Lys-Gly) (interchain with G-Cter in SUMO2) cross-link involves residue lysine 1133. 4 stretches are compositionally biased toward basic and acidic residues: residues 1143-1163 (SKDL…KKES), 1170-1180 (YWKEARERDWF), 1214-1230 (HTRD…RAEH), and 1237-1248 (RQREESETRSES). Disordered regions lie at residues 1143–1647 (SKDL…DALS), 1670–1785 (EDPQ…SAPV), 1905–1991 (APAS…TAEL), 2005–2164 (ISKK…VSEM), 2218–2238 (LPNT…SLTS), 2257–2290 (WENS…GPST), 2317–2341 (GAGT…NICK), and 2668–2701 (DIKP…QSSK). Phosphoserine is present on residues serine 1242, serine 1246, serine 1248, serine 1249, and serine 1263. 4 stretches are compositionally biased toward basic and acidic residues: residues 1261 to 1297 (RGSE…ENKK), 1305 to 1330 (FKPD…DKAK), 1381 to 1418 (EVPK…PARE), and 1429 to 1446 (PRQD…REAA). Residues threonine 1265 and threonine 1267 each carry the phosphothreonine modification. Polar residues-rich tracts occupy residues 1457–1469 (TNGT…QEPV) and 1477–1491 (GNKT…SSDQ). Residues 1505-1517 (FNERRERDEKKNA) are compositionally biased toward basic and acidic residues. Serine 1544 carries the phosphoserine modification. Composition is skewed to basic and acidic residues over residues 1620 to 1634 (NSKD…DPKP) and 1692 to 1704 (RLQD…KEEQ). Positions 1682 to 1717 (TEVVSKKQQKRLQDEERRKKEEQVIQVWNKKNANEK) form a coiled coil. The span at 1742 to 1785 (SSASVPPLASAPLPPSTSASVPASTSAPLPATLTPVPASTSAPV) shows a compositional bias: low complexity. The span at 1913-1929 (APAPTPVSAPNPAPPAP) shows a compositional bias: pro residues. Low complexity predominate over residues 1943 to 1952 (PLQTTSQSSK). Threonine 1965 carries the post-translational modification Phosphothreonine. The span at 1976 to 1986 (KSIQTPQSHGT) shows a compositional bias: polar residues. Serine 1983 and serine 2013 each carry phosphoserine. Residues 2019–2035 (SVSAWNKPLTSFGSAPS) are compositionally biased toward polar residues. The span at 2075-2088 (KSADKIPEPKEQRQ) shows a compositional bias: basic and acidic residues. The residue at position 2105 (serine 2105) is a Phosphoserine. Basic and acidic residues predominate over residues 2108–2132 (ENKEHKPGPIGKERSLKNRKVKDAQ). At serine 2143 the chain carries Phosphoserine. Residues 2257–2267 (WENSPNVREKG) are compositionally biased toward basic and acidic residues. At serine 2260 the chain carries Phosphoserine. Positions 2269 to 2290 (PVTSTAPPIATGVSSSASGPST) are enriched in polar residues. Low complexity predominate over residues 2320–2334 (TYTTSSLSTKSTTTS). Phosphothreonine occurs at positions 2673 and 2682. Residues 2679-2701 (RSTTPTSSPFRATSTSPNSQSSK) are compositionally biased toward polar residues. Phosphoserine is present on residues serine 2686 and serine 2694. Residue arginine 2814 is modified to Omega-N-methylarginine. Arginine 2823 is modified (asymmetric dimethylarginine; alternate). The residue at position 2823 (arginine 2823) is an Omega-N-methylarginine; alternate. Polar residues predominate over residues 2824-2833 (FFSEQQQSKQ). The tract at residues 2824–2896 (FFSEQQQSKQ…QAIKTEETKS (73 aa)) is disordered.

Overexpressed in bladder cancer.

It localises to the cytoplasm. Its subcellular location is the stress granule. Required for efficient formation of stress granules. In Homo sapiens (Human), this protein is Protein PRRC2C.